The chain runs to 439 residues: Chitinase-like protein Idgf1 (439 aa).

Positions 1-20 are cleaved as a signal peptide; sequence MRFQLCYLLGLLSVTSLSHA. The region spanning 22–439 is the GH18 domain; the sequence is SNLICYYDST…IVRSIKYFMG (418 aa). Residues C26 and C53 are joined by a disulfide bond. 3 N-linked (GlcNAc...) asparagine glycosylation sites follow: N122, N218, and N346. C340 and C423 form a disulfide bridge.

The protein belongs to the glycosyl hydrolase 18 family. IDGF subfamily. Glycosylated.

The protein resides in the secreted. In terms of biological role, cooperates with insulin-like peptides to stimulate the proliferation, polarization and motility of imaginal disk cells. May act by stabilizing the binding of insulin-like peptides to its receptor through a simultaneous interaction with both molecules to form a multiprotein signaling complex. The sequence is that of Chitinase-like protein Idgf1 (Idgf1) from Drosophila yakuba (Fruit fly).